Here is a 252-residue protein sequence, read N- to C-terminus: Probable transcriptional regulatory protein Bcav_1989 (252 aa).

It belongs to the TACO1 family.

The protein resides in the cytoplasm. This chain is Probable transcriptional regulatory protein Bcav_1989, found in Beutenbergia cavernae (strain ATCC BAA-8 / DSM 12333 / CCUG 43141 / JCM 11478 / NBRC 16432 / NCIMB 13614 / HKI 0122).